We begin with the raw amino-acid sequence, 327 residues long: L-lactate dehydrogenase (327 aa).

NAD(+) is bound by residues valine 18, aspartate 39, lysine 44, tyrosine 69, and 83-84 (GA). Substrate contacts are provided by residues glutamine 86, arginine 92, and 124–127 (NPVD). Residues 122 to 124 (AAN) and serine 147 each bind NAD(+). 152-155 (DSAR) provides a ligand contact to substrate. The beta-D-fructose 1,6-bisphosphate site is built by arginine 157 and histidine 172. Catalysis depends on histidine 179, which acts as the Proton acceptor. Tyrosine 224 bears the Phosphotyrosine mark. Substrate is bound at residue threonine 233.

Belongs to the LDH/MDH superfamily. LDH family. Homotetramer.

It is found in the cytoplasm. The enzyme catalyses (S)-lactate + NAD(+) = pyruvate + NADH + H(+). It participates in fermentation; pyruvate fermentation to lactate; (S)-lactate from pyruvate: step 1/1. Its activity is regulated as follows. Allosterically activated by fructose 1,6-bisphosphate (FBP). Its function is as follows. Catalyzes the conversion of lactate to pyruvate. The protein is L-lactate dehydrogenase of Streptococcus equi subsp. equi (strain 4047).